Reading from the N-terminus, the 366-residue chain is 3-dehydroquinate synthase (366 aa).

Residues Asp71–Lys76, Gly105–Asp109, Thr129–Thr130, Lys142, Lys151, and Cys169–Thr172 each bind NAD(+). 3 residues coordinate Zn(2+): Glu184, His248, and His265.

Belongs to the sugar phosphate cyclases superfamily. Dehydroquinate synthase family. NAD(+) is required as a cofactor. The cofactor is Co(2+). Requires Zn(2+) as cofactor.

The protein localises to the cytoplasm. It carries out the reaction 7-phospho-2-dehydro-3-deoxy-D-arabino-heptonate = 3-dehydroquinate + phosphate. Its pathway is metabolic intermediate biosynthesis; chorismate biosynthesis; chorismate from D-erythrose 4-phosphate and phosphoenolpyruvate: step 2/7. Functionally, catalyzes the conversion of 3-deoxy-D-arabino-heptulosonate 7-phosphate (DAHP) to dehydroquinate (DHQ). The protein is 3-dehydroquinate synthase of Photorhabdus laumondii subsp. laumondii (strain DSM 15139 / CIP 105565 / TT01) (Photorhabdus luminescens subsp. laumondii).